The chain runs to 558 residues: Putative ABC transporter ATP-binding protein SAG1633 (558 aa).

ABC transporter domains are found at residues Ile5 to Glu246 and Leu295 to Lys527. ATP-binding positions include Gly39–Ser46 and Gly328–Ser335.

This sequence belongs to the ABC transporter superfamily.

Its subcellular location is the cell membrane. In terms of biological role, probably part of an ABC transporter complex. Responsible for energy coupling to the transport system. In Streptococcus agalactiae serotype V (strain ATCC BAA-611 / 2603 V/R), this protein is Putative ABC transporter ATP-binding protein SAG1633.